Reading from the N-terminus, the 224-residue chain is MAEQSAGGQGAPEGRDSRDSREGRGRRDGGRGGRDSDKSNYLERVVAINRVSKVVKGGRRFSFTALVIVGDGNGMVGVGYGKAKEVPAAIAKGVEEARKGFFRVPLIGGTITHPVQGEAAAGVVLLRPASPGTGVLAGGAARAVLECAGVHDILAKSLGSDNAINVVHATVAALKMLQRPEEVAARRGLPIEDVAPAGMLKARRESEALAAAAVREAQTSGAQP.

The disordered stretch occupies residues 1 to 38; it reads MAEQSAGGQGAPEGRDSRDSREGRGRRDGGRGGRDSDK. Over residues 13–38 the composition is skewed to basic and acidic residues; the sequence is EGRDSRDSREGRGRRDGGRGGRDSDK. One can recognise an S5 DRBM domain in the interval 41–104; it reads YLERVVAINR…EEARKGFFRV (64 aa).

Belongs to the universal ribosomal protein uS5 family. In terms of assembly, part of the 30S ribosomal subunit. Contacts proteins S4 and S8.

In terms of biological role, with S4 and S12 plays an important role in translational accuracy. Its function is as follows. Located at the back of the 30S subunit body where it stabilizes the conformation of the head with respect to the body. The chain is Small ribosomal subunit protein uS5 from Mycobacterium ulcerans (strain Agy99).